The sequence spans 574 residues: ATP-grasp enzyme fsqD (574 aa).

The ATP-grasp domain occupies 234–462 (NKFLTSKYVG…YWGLAAVLGV (229 aa)). 263–318 (ALPYPLIVKPCDGWSSEGVSRVESPDAFPAAVKSIDTSRHGTEFVMEPYCDGPEVD) provides a ligand contact to ATP. Residues Glu-394, Glu-431, and Asn-433 each coordinate Mg(2+). Residues Glu-394, Glu-431, and Asn-433 each coordinate Mn(2+).

Mg(2+) serves as cofactor. Mn(2+) is required as a cofactor.

Its pathway is secondary metabolite biosynthesis. Functionally, ATP-grasp enzyme; part of the gene cluster that mediates the biosynthesis of the isoquinoline alkaloids fumisoquin A, fumisoquin B and fumisoquin C; as well as small amounts of fumipyrrole as a shunt metabolite. The products of the cluster lead to a brown coloration and are important for growth and conidiation. The nonribosomal peptide synthetase-like protein fsqF, which lacks a canonical condensation domain, is required for addition of a serine-derived dehydroalanine moiety to activated tyrosine but is not essential for the subsequent steps leading to isoquinoline formation. A different enzyme, most likely the ATP-grasp enzyme fsqD, is responsible for activation of tyrosine. Three additional enzymes encoded by the fsq cluster, the N-methyltransferase fsqC, the phenol 2-monooxygenase fsqG and the FAD-dependent oxidase fsqB, catalyze the formation of the isoquinoline ring system in the fumisoquins. FsqB converts the fspF thiolation domain-bound (2S,4S,5S)-2-amino-6-(3,4-dihydroxyphenyl)-4-hydroxy-5-(methylamino)hexanoyl into isoquinoline. The cyclization most likely proceeds via a two-step mechanism, beginning with FAD-dependent oxidation of the methyl group to an iminium species followed by electrophilic attack on the deprotonated phenol. The protein is ATP-grasp enzyme fsqD of Aspergillus fumigatus (strain ATCC MYA-4609 / CBS 101355 / FGSC A1100 / Af293) (Neosartorya fumigata).